A 704-amino-acid chain; its full sequence is Myb-related protein B (704 aa).

3 HTH myb-type domains span residues 26-77 (RDNR…LRVL), 78-133 (NPDL…NPEV), and 134-184 (KKSC…KRKV). The H-T-H motif DNA-binding region spans 54–77 (WKFLASHFPNRTDQQCQYRWLRVL). A Glycyl lysine isopeptide (Lys-Gly) (interchain with G-Cter in SUMO2) cross-link involves residue Lys-104. 2 consecutive DNA-binding regions (H-T-H motif) follow at residues 106-129 (WTLI…HNHL) and 157-180 (WAEI…NSTI). Residue Lys-197 forms a Glycyl lysine isopeptide (Lys-Gly) (interchain with G-Cter in SUMO2) linkage. Thr-267 carries the post-translational modification Phosphothreonine. Lys-275 is covalently cross-linked (Glycyl lysine isopeptide (Lys-Gly) (interchain with G-Cter in SUMO2)). At Ser-282 the chain carries Phosphoserine. The tract at residues 325 to 412 (LSKFDLPEEP…GSGIGTPPSV (88 aa)) is disordered. Residues 339-366 (SVVSSPVQPQTSQQQQEEALQSSQQAAT) show a composition bias toward low complexity. Ser-396 carries the phosphoserine modification. Lys-414 participates in a covalent cross-link: Glycyl lysine isopeptide (Lys-Gly) (interchain with G-Cter in SUMO2). Thr-443 and Thr-447 each carry phosphothreonine; by CDK2. Glycyl lysine isopeptide (Lys-Gly) (interchain with G-Cter in SUMO2) cross-links involve residues Lys-450 and Lys-485. Phosphothreonine; by CDK2 is present on residues Thr-490 and Thr-497. Residues Lys-502 and Lys-513 each participate in a glycyl lysine isopeptide (Lys-Gly) (interchain with G-Cter in SUMO2) cross-link. A Phosphothreonine; by CDK2 modification is found at Thr-524. Residues Lys-527, Lys-537, and Lys-550 each participate in a glycyl lysine isopeptide (Lys-Gly) (interchain with G-Cter in SUMO2) cross-link. Ser-581 is modified (phosphoserine; by CDK2). Glycyl lysine isopeptide (Lys-Gly) (interchain with G-Cter in SUMO2) cross-links involve residues Lys-588 and Lys-600. Residues 603-626 (SSTMPKPLSLPTSVTPSSCGFTSP) form a disordered region. The span at 607-620 (PKPLSLPTSVTPSS) shows a compositional bias: low complexity. Glycyl lysine isopeptide (Lys-Gly) (interchain with G-Cter in SUMO2) cross-links involve residues Lys-629, Lys-643, and Lys-652.

Component of the DREAM complex (also named LINC complex) at least composed of E2F4, E2F5, LIN9, LIN37, LIN52, LIN54, MYBL1, MYBL2, RBL1, RBL2, RBBP4, TFDP1 and TFDP2. The complex exists in quiescent cells where it represses cell cycle-dependent genes. It dissociates in S phase when LIN9, LIN37, LIN52 and LIN54 form a subcomplex that binds to MYBL2. Interacts with CCNF (via the Cyclin N-terminal domain). Phosphorylated by cyclin A/CDK2 during S-phase. Phosphorylation at Thr-524 is probably involved in transcriptional activity.

It is found in the nucleus. Transcription factor involved in the regulation of cell survival, proliferation, and differentiation. Transactivates the expression of the CLU gene. The chain is Myb-related protein B (Mybl2) from Mus musculus (Mouse).